The following is a 103-amino-acid chain: Small integral membrane protein 32 (103 aa).

A helical transmembrane segment spans residues 55 to 75 (YLLLFFLLLLSVALVVLFIGC).

The protein localises to the membrane. The protein is Small integral membrane protein 32 of Homo sapiens (Human).